The primary structure comprises 151 residues: MTGRILLLNGPNLNMLGLREPEIYGHATLDDVVELVRARAEHHGLEVDAVQSNHEGDLIDALHRARGTHLGCVLNPGGLTHTSVSLLDAVKASELPTVEVHISNPHARESFRHHSYISPVAAAVIAGAGVDGYGFAVDILANNHLQRTASQ.

Y24 serves as the catalytic Proton acceptor. Residues N75, H81, and D88 each contribute to the substrate site. The active-site Proton donor is H101. Substrate-binding positions include 102 to 103 (IS) and R112.

This sequence belongs to the type-II 3-dehydroquinase family. Homododecamer.

The catalysed reaction is 3-dehydroquinate = 3-dehydroshikimate + H2O. The protein operates within metabolic intermediate biosynthesis; chorismate biosynthesis; chorismate from D-erythrose 4-phosphate and phosphoenolpyruvate: step 3/7. Catalyzes a trans-dehydration via an enolate intermediate. This Corynebacterium efficiens (strain DSM 44549 / YS-314 / AJ 12310 / JCM 11189 / NBRC 100395) protein is 3-dehydroquinate dehydratase 1 (aroQ1).